A 1102-amino-acid chain; its full sequence is Probable leucine-rich repeat receptor-like protein kinase At5g63930 (1102 aa).

Positions methionine 1–glycine 26 are cleaved as a signal peptide. The Extracellular segment spans residues leucine 27 to lysine 737. Residues asparagine 54, asparagine 68, asparagine 79, and asparagine 119 are each glycosylated (N-linked (GlcNAc...) asparagine). LRR repeat units follow at residues aspartate 72–leucine 96, valine 97–cysteine 120, serine 122–leucine 144, valine 145–serine 170, serine 172–leucine 192, lysine 193–cysteine 216, glutamate 217–lysine 241, leucine 243–cysteine 264, threonine 265–leucine 288, glutamine 289–leucine 312, tyrosine 314–isoleucine 336, glutamate 337–leucine 360, lysine 361–tyrosine 383, arginine 385–tyrosine 408, serine 409–histidine 432, serine 433–cysteine 456, threonine 458–glutamine 480, valine 481–cysteine 504, serine 505–leucine 528, serine 529–cysteine 552, methionine 554–leucine 576, tyrosine 577–arginine 602, threonine 604–leucine 624, threonine 625–leucine 649, methionine 651–asparagine 672, and serine 674–serine 700. A glycan (N-linked (GlcNAc...) asparagine) is linked at asparagine 180. N-linked (GlcNAc...) asparagine glycosylation occurs at asparagine 263. Asparagine 302 and asparagine 311 each carry an N-linked (GlcNAc...) asparagine glycan. A glycan (N-linked (GlcNAc...) asparagine) is linked at asparagine 362. A glycan (N-linked (GlcNAc...) asparagine) is linked at asparagine 444. Asparagine 482 and asparagine 503 each carry an N-linked (GlcNAc...) asparagine glycan. N-linked (GlcNAc...) asparagine glycosylation is found at asparagine 535, asparagine 564, asparagine 588, asparagine 599, asparagine 614, asparagine 632, asparagine 661, asparagine 672, asparagine 680, and asparagine 695. Residues isoleucine 738–valine 758 traverse the membrane as a helical segment. Residues tyrosine 759–proline 1102 lie on the Cytoplasmic side of the membrane. Residues threonine 793 and threonine 801 each carry the phosphothreonine modification. Residues phenylalanine 804 to leucine 1091 enclose the Protein kinase domain. ATP contacts are provided by residues valine 810–valine 818 and lysine 832. Phosphotyrosine is present on residues tyrosine 882 and tyrosine 919. Aspartate 932 acts as the Proton acceptor in catalysis. Serine 966 is subject to Phosphoserine. A phosphotyrosine mark is found at tyrosine 974 and tyrosine 981. Threonine 982 bears the Phosphothreonine mark.

It belongs to the protein kinase superfamily. Ser/Thr protein kinase family.

The protein localises to the cell membrane. It catalyses the reaction L-seryl-[protein] + ATP = O-phospho-L-seryl-[protein] + ADP + H(+). The enzyme catalyses L-threonyl-[protein] + ATP = O-phospho-L-threonyl-[protein] + ADP + H(+). The polypeptide is Probable leucine-rich repeat receptor-like protein kinase At5g63930 (Arabidopsis thaliana (Mouse-ear cress)).